Reading from the N-terminus, the 207-residue chain is Ribosomal RNA small subunit methyltransferase G (207 aa).

S-adenosyl-L-methionine-binding positions include G75, L80, 126–127, and R141; that span reads VE.

This sequence belongs to the methyltransferase superfamily. RNA methyltransferase RsmG family.

It localises to the cytoplasm. It carries out the reaction guanosine(527) in 16S rRNA + S-adenosyl-L-methionine = N(7)-methylguanosine(527) in 16S rRNA + S-adenosyl-L-homocysteine. In terms of biological role, specifically methylates the N7 position of guanine in position 527 of 16S rRNA. The sequence is that of Ribosomal RNA small subunit methyltransferase G from Psychromonas ingrahamii (strain DSM 17664 / CCUG 51855 / 37).